A 197-amino-acid polypeptide reads, in one-letter code: UPF0301 protein BAV3012 (197 aa).

This sequence belongs to the UPF0301 (AlgH) family.

This Bordetella avium (strain 197N) protein is UPF0301 protein BAV3012.